A 372-amino-acid chain; its full sequence is NAD(P)H-quinone oxidoreductase subunit 1 (372 aa).

The next 8 helical transmembrane spans lie at leucine 27–valine 47, leucine 97–valine 117, valine 128–methionine 148, alanine 166–methionine 186, isoleucine 204–leucine 224, valine 266–valine 286, alanine 308–leucine 328, and phenylalanine 347–proline 367.

The protein belongs to the complex I subunit 1 family. NDH-1 is composed of at least 11 different subunits.

It localises to the cellular thylakoid membrane. The catalysed reaction is a plastoquinone + NADH + (n+1) H(+)(in) = a plastoquinol + NAD(+) + n H(+)(out). The enzyme catalyses a plastoquinone + NADPH + (n+1) H(+)(in) = a plastoquinol + NADP(+) + n H(+)(out). Its function is as follows. NDH-1 shuttles electrons from an unknown electron donor, via FMN and iron-sulfur (Fe-S) centers, to quinones in the respiratory and/or the photosynthetic chain. The immediate electron acceptor for the enzyme in this species is believed to be plastoquinone. Couples the redox reaction to proton translocation, and thus conserves the redox energy in a proton gradient. The protein is NAD(P)H-quinone oxidoreductase subunit 1 of Synechococcus sp. (strain WH7803).